We begin with the raw amino-acid sequence, 456 residues long: E3 ubiquitin-protein ligase PUB24 (456 aa).

The U-box domain occupies 9 to 83 (EIPNYFICPI…QHWCVENETR (75 aa)).

In terms of processing, auto-ubiquitinated.

It carries out the reaction S-ubiquitinyl-[E2 ubiquitin-conjugating enzyme]-L-cysteine + [acceptor protein]-L-lysine = [E2 ubiquitin-conjugating enzyme]-L-cysteine + N(6)-ubiquitinyl-[acceptor protein]-L-lysine.. The protein operates within protein modification; protein ubiquitination. In terms of biological role, E3 ubiquitin-protein ligase that acts as a negative regulator of the immunity triggered by the pathogen-associated molecular patterns (PAMPs), in association with PUB22 and PUB23. The polypeptide is E3 ubiquitin-protein ligase PUB24 (PUB24) (Arabidopsis thaliana (Mouse-ear cress)).